Reading from the N-terminus, the 656-residue chain is Fidgetin-like protein 1 (656 aa).

Polar residues predominate over residues 293-302; the sequence is KYSNQPQRNP. The segment at 293 to 354 is disordered; sequence KYSNQPQRNP…QGNSEMNAPS (62 aa). Residues 331 to 340 show a composition bias toward basic and acidic residues; sequence RQEDVQDSNR. ATP is bound by residues A386 and 426 to 431; that span reads GTGKTL.

Belongs to the AAA ATPase family. As to quaternary structure, hexamer. Mg(2+) is required as a cofactor.

Its subcellular location is the nucleus. It is found in the cytoplasm. It localises to the perinuclear region. It carries out the reaction ATP + H2O = ADP + phosphate + H(+). May be involved in DNA double-strand break (DBS) repair via homologous recombination (HR). May regulate osteoblast proliferation and differentiation. In Xenopus tropicalis (Western clawed frog), this protein is Fidgetin-like protein 1 (fignl1).